The following is a 97-amino-acid chain: Co-chaperonin GroES (97 aa).

Belongs to the GroES chaperonin family. In terms of assembly, heptamer of 7 subunits arranged in a ring. Interacts with the chaperonin GroEL.

Its subcellular location is the cytoplasm. Its function is as follows. Together with the chaperonin GroEL, plays an essential role in assisting protein folding. The GroEL-GroES system forms a nano-cage that allows encapsulation of the non-native substrate proteins and provides a physical environment optimized to promote and accelerate protein folding. GroES binds to the apical surface of the GroEL ring, thereby capping the opening of the GroEL channel. The sequence is that of Co-chaperonin GroES from Blochmanniella floridana.